Here is a 264-residue protein sequence, read N- to C-terminus: Glycosylphosphatidylinositol anchor biosynthesis protein 11 (264 aa).

Residues 1–45 (MPLVDPVTMSTPSTPAKAMGKSLPNTVKDPSPPPKAGSHTRSPVE) are disordered. Transmembrane regions (helical) follow at residues 49–69 (NSYY…VLLW), 83–103 (LILP…LPVA), 132–152 (LLSL…MVLF), 160–180 (APHT…PLFY), 202–222 (SVGG…PIPL), and 233–253 (VTVL…GRTL).

The protein belongs to the PIGF family.

The protein localises to the endoplasmic reticulum membrane. It functions in the pathway glycolipid biosynthesis; glycosylphosphatidylinositol-anchor biosynthesis. Functionally, acts in the GPI biosynthetic pathway between GlcNAc-PI synthesis and GPI transfer to protein. This Pyricularia oryzae (strain 70-15 / ATCC MYA-4617 / FGSC 8958) (Rice blast fungus) protein is Glycosylphosphatidylinositol anchor biosynthesis protein 11 (GPI11).